A 299-amino-acid chain; its full sequence is Pectin lyase (299 aa).

A signal peptide spans 1-18 (MKFSTFVSLGLTAITALA). 2 stretches are compositionally biased toward low complexity: residues 82 to 91 (RSAATSPSSD) and 232 to 246 (SASA…TTRT). Disordered regions lie at residues 82 to 105 (RSAA…PSPS) and 227 to 246 (SRGR…TTRT).

This sequence belongs to the polysaccharide lyase 1 family.

The protein localises to the secreted. The enzyme catalyses Eliminative cleavage of (1-&gt;4)-alpha-D-galacturonan methyl ester to give oligosaccharides with 4-deoxy-6-O-methyl-alpha-D-galact-4-enuronosyl groups at their non-reducing ends.. The protein is Pectin lyase (PELA) of Peyronellaea pinodes (Pea foot rot fungus).